Consider the following 498-residue polypeptide: Oligopeptide transport system permease protein AmiC (498 aa).

6 helical membrane-spanning segments follow: residues 12–32, 279–299, 316–336, 359–379, 415–435, and 461–481; these read SLVS…TLVP, MIVS…ALAV, LSTG…VYIV, SYVL…AIWI, MVPL…GATL, and VVGL…LGDI. The ABC transmembrane type-1 domain maps to 280–479; the sequence is IVSSAITGLI…CISIFSRLLG (200 aa).

It belongs to the binding-protein-dependent transport system permease family. OppBC subfamily.

Its subcellular location is the cell membrane. Functionally, part of the binding-protein-dependent transport system for oligopeptides; probably responsible for the translocation of the substrate across the membrane. The chain is Oligopeptide transport system permease protein AmiC (amiC) from Streptococcus pneumoniae serotype 4 (strain ATCC BAA-334 / TIGR4).